We begin with the raw amino-acid sequence, 332 residues long: Cytochrome c1, heme protein, mitochondrial (332 aa).

Residues 1–70 (MLARTCLRST…YYHLYGFASA (70 aa)) constitute a mitochondrion transit peptide. Over 71 to 277 (MTPAEEGLHA…AEPEMDDRKR (207 aa)) the chain is Mitochondrial intermembrane. The region spanning 97–250 (QALRRGFQVY…GLVDYEDGTP (154 aa)) is the Cytochrome c domain. Residues C110, C113, and H114 each contribute to the heme c site. Over residues 139-151 (EENEYDTEPNDQG) the composition is skewed to acidic residues. The segment at 139–162 (EENEYDTEPNDQGEIEKRPGKLSD) is disordered. M234 is a binding site for heme c. The helical transmembrane segment at 278-296 (MGMKVLVVTSVLFALSVYV) threads the bilayer. Residues 297 to 332 (KRYKWAWLKSRKIVYDPPKSPPPATNLALPQQRAKS) are Mitochondrial matrix-facing.

Belongs to the cytochrome c family. As to quaternary structure, component of the ubiquinol-cytochrome c oxidoreductase (cytochrome b-c1 complex, complex III, CIII), a multisubunit enzyme composed of 10 subunits. The complex is composed of 3 respiratory subunits cytochrome b (cob), cytochrome c1 (cyt-1) and Rieske protein (fes-1), 2 core protein subunits pep and ucr-1, and 5 low-molecular weight protein subunits qcr6, qcr7, qcr8, qcr9 and probably NCU16844/qcr10. The complex exists as an obligatory dimer and forms supercomplexes (SCs) in the inner mitochondrial membrane with NADH-ubiquinone oxidoreductase (complex I, CI) and cytochrome c oxidase (complex IV, CIV), resulting in different assemblies (supercomplexes SCI(1)III(2), SCIII(2)IV(1) and SCIII(2)IV(2) as well as higher order I(x)III(y)IV(z) megacomplexes). It depends on heme c as a cofactor.

The protein resides in the mitochondrion inner membrane. It catalyses the reaction a quinol + 2 Fe(III)-[cytochrome c](out) = a quinone + 2 Fe(II)-[cytochrome c](out) + 2 H(+)(out). In terms of biological role, component of the ubiquinol-cytochrome c oxidoreductase, a multisubunit transmembrane complex that is part of the mitochondrial electron transport chain which drives oxidative phosphorylation. The respiratory chain contains 3 multisubunit complexes succinate dehydrogenase (complex II, CII), ubiquinol-cytochrome c oxidoreductase (cytochrome b-c1 complex, complex III, CIII) and cytochrome c oxidase (complex IV, CIV), that cooperate to transfer electrons derived from NADH and succinate to molecular oxygen, creating an electrochemical gradient over the inner membrane that drives transmembrane transport and the ATP synthase. The cytochrome b-c1 complex catalyzes electron transfer from ubiquinol to cytochrome c, linking this redox reaction to translocation of protons across the mitochondrial inner membrane, with protons being carried across the membrane as hydrogens on the quinol. In the process called Q cycle, 2 protons are consumed from the matrix, 4 protons are released into the intermembrane space and 2 electrons are passed to cytochrome c. Cytochrome c1 is a catalytic core subunit containing a c-type heme. It transfers electrons from the [2Fe-2S] iron-sulfur cluster of the Rieske protein to cytochrome c. In Neurospora crassa (strain ATCC 24698 / 74-OR23-1A / CBS 708.71 / DSM 1257 / FGSC 987), this protein is Cytochrome c1, heme protein, mitochondrial (cyt-1).